Reading from the N-terminus, the 603-residue chain is UvrABC system protein C (603 aa).

The 78-residue stretch at 15–92 (DQPGCYLMKN…IQKHQPYYNI (78 aa)) folds into the GIY-YIG domain. Residues 197 to 232 (AQVKKQLTARMERAAGQLEFERAAEIRDQLHYIEVT) enclose the UVR domain.

The protein belongs to the UvrC family. As to quaternary structure, interacts with UvrB in an incision complex.

Its subcellular location is the cytoplasm. Functionally, the UvrABC repair system catalyzes the recognition and processing of DNA lesions. UvrC both incises the 5' and 3' sides of the lesion. The N-terminal half is responsible for the 3' incision and the C-terminal half is responsible for the 5' incision. The chain is UvrABC system protein C from Limosilactobacillus fermentum (strain NBRC 3956 / LMG 18251) (Lactobacillus fermentum).